Here is a 119-residue protein sequence, read N- to C-terminus: HTH-type transcriptional regulator SarX (119 aa).

Residues 55–78 constitute a DNA-binding region (H-T-H motif); that stretch reads LKTAMDELDLSRTKLLVSIRRLIE.

It belongs to the SarA family.

The protein resides in the cytoplasm. Involved in the regulation of virulence genes. Acts as a repressor of the agr locus and consequently targets genes regulated by the agr system such as sspA, hla and hlb. Binds directly to the agr promoter region. In Staphylococcus aureus (strain bovine RF122 / ET3-1), this protein is HTH-type transcriptional regulator SarX (sarX).